The following is an 86-amino-acid chain: Large ribosomal subunit protein bL27 (86 aa).

The segment covering 1 to 10 has biased composition (gly residues); the sequence is MAQKKGGGST. Positions 1–20 are disordered; the sequence is MAQKKGGGSTRNGRDSESKR.

The protein belongs to the bacterial ribosomal protein bL27 family.

This is Large ribosomal subunit protein bL27 from Bordetella avium (strain 197N).